The chain runs to 168 residues: RNA pyrophosphohydrolase (168 aa).

A Nudix hydrolase domain is found at 8–160 (PYRTCVGIAL…KRPVYERVAK (153 aa)). Residues 47-68 (GGVDPGEDAWEAAKRELYEETS) carry the Nudix box motif.

Belongs to the Nudix hydrolase family. RppH subfamily. It depends on a divalent metal cation as a cofactor.

Its function is as follows. Accelerates the degradation of transcripts by removing pyrophosphate from the 5'-end of triphosphorylated RNA, leading to a more labile monophosphorylated state that can stimulate subsequent ribonuclease cleavage. The chain is RNA pyrophosphohydrolase from Bradyrhizobium sp. (strain ORS 278).